A 596-amino-acid chain; its full sequence is uncharacterized protein (596 aa).

2 stretches are compositionally biased toward basic residues: residues 1–10 (MRLRSQKRGN) and 18–29 (KTRKGKGKKLKP). The disordered stretch occupies residues 1–30 (MRLRSQKRGNKFVALPAKTRKGKGKKLKPK).

This is an uncharacterized protein from Magallana gigas (Pacific oyster).